Consider the following 95-residue polypeptide: MSLSGFEFSSIIAVLLLLIQLSSAAVLPVDYASQYGVASADEMTALPEEGSLFAERPAKRAQTFVRFGKRAQTFVRFGKRGQTFVRFGRSAPFEQ.

The signal sequence occupies residues 1–24; that stretch reads MSLSGFEFSSIIAVLLLLIQLSSA. Residues 25-58 constitute a propeptide that is removed on maturation; that stretch reads AVLPVDYASQYGVASADEMTALPEEGSLFAERPA. Residues Phe67, Phe77, and Phe87 each carry the phenylalanine amide modification. Positions 90-95 are excised as a propeptide; the sequence is SAPFEQ.

It belongs to the FARP (FMRFamide related peptide) family.

Its subcellular location is the secreted. Its function is as follows. FMRFamides and FMRFamide-like peptides are neuropeptides. AQTFVRF-amide inhibits the activity of dissected pharyngeal myogenic muscle system. In Caenorhabditis briggsae, this protein is FMRFamide-like neuropeptides 16 (flp-16).